We begin with the raw amino-acid sequence, 245 residues long: tRNA1(Val) (adenine(37)-N6)-methyltransferase (245 aa).

It belongs to the methyltransferase superfamily. tRNA (adenine-N(6)-)-methyltransferase family.

The protein resides in the cytoplasm. The catalysed reaction is adenosine(37) in tRNA1(Val) + S-adenosyl-L-methionine = N(6)-methyladenosine(37) in tRNA1(Val) + S-adenosyl-L-homocysteine + H(+). Its function is as follows. Specifically methylates the adenine in position 37 of tRNA(1)(Val) (anticodon cmo5UAC). This chain is tRNA1(Val) (adenine(37)-N6)-methyltransferase (yfiC), found in Escherichia coli (strain K12).